Reading from the N-terminus, the 237-residue chain is ATP-dependent dethiobiotin synthetase BioD (237 aa).

12–17 (DAGKTL) contacts ATP. Thr-16 lines the Mg(2+) pocket. The active site involves Lys-37. Position 41 (Ser-41) interacts with substrate. ATP is bound by residues Asp-54, 116-119 (EGAG), and 213-215 (PRL). Mg(2+) is bound by residues Asp-54 and Glu-116.

It belongs to the dethiobiotin synthetase family. In terms of assembly, homodimer. Mg(2+) serves as cofactor.

The protein localises to the cytoplasm. The catalysed reaction is (7R,8S)-7,8-diammoniononanoate + CO2 + ATP = (4R,5S)-dethiobiotin + ADP + phosphate + 3 H(+). Its pathway is cofactor biosynthesis; biotin biosynthesis; biotin from 7,8-diaminononanoate: step 1/2. Functionally, catalyzes a mechanistically unusual reaction, the ATP-dependent insertion of CO2 between the N7 and N8 nitrogen atoms of 7,8-diaminopelargonic acid (DAPA, also called 7,8-diammoniononanoate) to form a ureido ring. The polypeptide is ATP-dependent dethiobiotin synthetase BioD (Chromohalobacter salexigens (strain ATCC BAA-138 / DSM 3043 / CIP 106854 / NCIMB 13768 / 1H11)).